The sequence spans 189 residues: Putative manganese efflux pump MntP (189 aa).

6 helical membrane-spanning segments follow: residues 3–23 (IVSTLLLALAMSADAFAAAVS), 41–61 (MIFGVIEATTPLVGWSLGRVA), 62–82 (ADYVTAWDHWIAFSILAFLGI), 103–123 (SFILLAMTALGTSIDAMSVGV), 132–152 (IVPVAFAIGIVTCIMVSAGVM), and 167–187 (IIGGLILIGIGSLILYKHLYG).

This sequence belongs to the MntP (TC 9.B.29) family.

It is found in the cell inner membrane. In terms of biological role, probably functions as a manganese efflux pump. This Methylobacillus flagellatus (strain ATCC 51484 / DSM 6875 / VKM B-1610 / KT) protein is Putative manganese efflux pump MntP.